The primary structure comprises 507 residues: Variant surface glycoprotein ILTAT 1.25 (507 aa).

The first 21 residues, 1 to 21 (MQSQQQPVFISIILLAINTDA), serve as a signal peptide directing secretion. Residues 83-95 (EPEAAPKESRSDE) show a composition bias toward basic and acidic residues. Residues 83–102 (EPEAAPKESRSDETPEACKA) are disordered. 2 N-linked (GlcNAc...) asparagine glycosylation sites follow: asparagine 141 and asparagine 371. Over residues 384 to 395 (PTKQPPAKAAAA) the composition is skewed to low complexity. Residues 384–474 (PTKQPPAKAA…KKEEECKSPN (91 aa)) are disordered. The segment covering 396 to 420 (PEKKSNPQKDCNKNTKKRDCKEGDG) has biased composition (basic and acidic residues). Over residues 444 to 455 (SAAGAGDAGASD) the composition is skewed to low complexity. Residues 456-474 (TEAKKCSDKKKEEECKSPN) show a composition bias toward basic and acidic residues. Aspartate 484 carries GPI-anchor amidated aspartate lipidation. A propeptide spans 485 to 507 (SSILANKQFALSVASAAFVALLF) (removed in mature form).

Its subcellular location is the cell membrane. VSG forms a coat on the surface of the parasite. The trypanosome evades the immune response of the host by expressing a series of antigenically distinct VSGs from an estimated 1000 VSG genes. This is Variant surface glycoprotein ILTAT 1.25 from Trypanosoma brucei brucei.